An 817-amino-acid chain; its full sequence is DNA gyrase subunit A (817 aa).

Residues 39–505 form the Topo IIA-type catalytic domain; that stretch reads LPDARDGLKP…AVEDVSIEDL (467 aa). Y127 acts as the O-(5'-phospho-DNA)-tyrosine intermediate in catalysis. The GyrA-box motif lies at 532–538; that stretch reads QGRGGKG.

Belongs to the type II topoisomerase GyrA/ParC subunit family. In terms of assembly, heterotetramer, composed of two GyrA and two GyrB chains. In the heterotetramer, GyrA contains the active site tyrosine that forms a transient covalent intermediate with DNA, while GyrB binds cofactors and catalyzes ATP hydrolysis.

It localises to the cytoplasm. It carries out the reaction ATP-dependent breakage, passage and rejoining of double-stranded DNA.. A type II topoisomerase that negatively supercoils closed circular double-stranded (ds) DNA in an ATP-dependent manner to modulate DNA topology and maintain chromosomes in an underwound state. Negative supercoiling favors strand separation, and DNA replication, transcription, recombination and repair, all of which involve strand separation. Also able to catalyze the interconversion of other topological isomers of dsDNA rings, including catenanes and knotted rings. Type II topoisomerases break and join 2 DNA strands simultaneously in an ATP-dependent manner. The polypeptide is DNA gyrase subunit A (Aminobacterium colombiense (strain DSM 12261 / ALA-1)).